Reading from the N-terminus, the 432-residue chain is Bouquet formation protein 4 (432 aa).

Residues 1-21 (MTENEKSRSLPAERNPLYKDD) are disordered. The HTH APSES-type domain maps to 38-147 (EFPDGPATFV…SSTPSTYATP (110 aa)). The segment at residues 73–94 (ATSMFRSAFPKATQEEEDLEMR) is a DNA-binding region (H-T-H motif). Low complexity-rich tracts occupy residues 139-152 (STPSTYATPSRPTA) and 163-172 (ESSTSATTTS). 2 disordered regions span residues 139–283 (STPS…GKIR) and 364–384 (KSSIRSSPKSKKRSREDFEEN). Basic and acidic residues predominate over residues 180-228 (RLAEHLENSKKTILQHDNKEEDKEIHSEENETKDEIKSEKKEPEIKKQE). The segment covering 229–241 (GGSSTEKVGQPSS) has biased composition (polar residues).

Interacts with rap1.

The protein resides in the cytoplasm. The protein localises to the nucleus. It is found in the nucleus inner membrane. In terms of biological role, connects telomeres to the nuclear envelop (NE) during both vegetative growth and meiosis. This connection ensures clustering of telomeres to the spindle pole body (SPB) when cells enter meiotic prophase. The polypeptide is Bouquet formation protein 4 (bqt4) (Schizosaccharomyces pombe (strain 972 / ATCC 24843) (Fission yeast)).